A 216-amino-acid chain; its full sequence is GTPase IMAP family member GIMD1 (216 aa).

In terms of domain architecture, AIG1-type G spans 5–216 (KMIINLAVLG…ENHFQVLSFT (212 aa)). Residues 14–22 (GKTQSGKSS), S35, and 147–149 (HAE) contribute to the GTP site.

Belongs to the TRAFAC class TrmE-Era-EngA-EngB-Septin-like GTPase superfamily. AIG1/Toc34/Toc159-like paraseptin GTPase family. IAN subfamily.

The protein is GTPase IMAP family member GIMD1 (Gimd1) of Rattus norvegicus (Rat).